The primary structure comprises 156 residues: Arginine repressor (156 aa).

Belongs to the ArgR family.

The protein resides in the cytoplasm. It functions in the pathway amino-acid biosynthesis; L-arginine biosynthesis [regulation]. Its function is as follows. Regulates arginine biosynthesis genes. In Shewanella sp. (strain ANA-3), this protein is Arginine repressor.